Here is a 171-residue protein sequence, read N- to C-terminus: Ribosome maturation factor RimM (171 aa).

The PRC barrel domain maps to 98–170; it reads EGEFYLHQII…AVQVSVPEGL (73 aa).

This sequence belongs to the RimM family. As to quaternary structure, binds ribosomal protein uS19.

It localises to the cytoplasm. In terms of biological role, an accessory protein needed during the final step in the assembly of 30S ribosomal subunit, possibly for assembly of the head region. Essential for efficient processing of 16S rRNA. May be needed both before and after RbfA during the maturation of 16S rRNA. It has affinity for free ribosomal 30S subunits but not for 70S ribosomes. The polypeptide is Ribosome maturation factor RimM (Pediococcus pentosaceus (strain ATCC 25745 / CCUG 21536 / LMG 10740 / 183-1w)).